The following is a 1387-amino-acid chain: DNA-directed RNA polymerase subunit beta'' (1387 aa).

Zn(2+) contacts are provided by Cys-220, Cys-291, Cys-298, and Cys-301.

Belongs to the RNA polymerase beta' chain family. RpoC2 subfamily. As to quaternary structure, in plastids the minimal PEP RNA polymerase catalytic core is composed of four subunits: alpha, beta, beta', and beta''. When a (nuclear-encoded) sigma factor is associated with the core the holoenzyme is formed, which can initiate transcription. The cofactor is Zn(2+).

It is found in the plastid. It localises to the chloroplast. The catalysed reaction is RNA(n) + a ribonucleoside 5'-triphosphate = RNA(n+1) + diphosphate. DNA-dependent RNA polymerase catalyzes the transcription of DNA into RNA using the four ribonucleoside triphosphates as substrates. The polypeptide is DNA-directed RNA polymerase subunit beta'' (Carica papaya (Papaya)).